Here is a 163-residue protein sequence, read N- to C-terminus: MPASVLPLIEAAAHWPERGALVGLDLGTKTIGVAVSDPDRRLATGVETLQRKTFTADAARLLAIAGERNAAGFVLGLPINMDGSEGPRAQSTRAFARNLARLTDLAIGLWDERLSTVAVERELIGMDMSRAKRAKVIDEHAAIFILQGALDRLAVLRRTSKAN.

The protein belongs to the YqgF nuclease family.

It is found in the cytoplasm. Its function is as follows. Could be a nuclease involved in processing of the 5'-end of pre-16S rRNA. This Nitrobacter hamburgensis (strain DSM 10229 / NCIMB 13809 / X14) protein is Putative pre-16S rRNA nuclease.